The following is a 294-amino-acid chain: uncharacterized protein (294 aa).

Disordered stretches follow at residues 25 to 59 (VQVYRPVGQGAKRRINSEESDVSEDGNSKPKRVRR) and 77 to 141 (LKDD…FEAP). Acidic residues predominate over residues 86–139 (YEELEDDDDDESIEEESDSEFEGESSSDEEESSYDSDSDYDSETEPEDSDDDFE). The stretch at 201–234 (IKFYKRNTTFTEEELAEIEEDLLAEVKARYNNMK) forms a coiled coil. Basic and acidic residues predominate over residues 242–259 (TIETTEDDKKAGEVNKYD). Positions 242–294 (TIETTEDDKKAGEVNKYDIDDDFIEKTESDEEEEITEDDSSEQETVVVEPVDE) are disordered. Over residues 260–283 (IDDDFIEKTESDEEEEITEDDSSE) the composition is skewed to acidic residues.

This is an uncharacterized protein from Magallana gigas (Pacific oyster).